Reading from the N-terminus, the 368-residue chain is WAT1-related protein At5g40240 (368 aa).

Transmembrane regions (helical) follow at residues 18–38 (VVPF…NTLF), 50–70 (VFVF…SVIF), 82–102 (PLFF…IAGC), 111–131 (TLAS…AVIF), 142–162 (ATQA…VVVL), 194–214 (WIIG…WYIL), 226–246 (ITVV…VCLF), 260–280 (ISLA…ALTH), 292–312 (ISLF…IFLG), and 315–335 (LHLG…TVIW). EamA domains lie at 33 to 161 (GSNT…LVVV) and 208 to 334 (ISVW…YTVI).

The protein belongs to the drug/metabolite transporter (DMT) superfamily. Plant drug/metabolite exporter (P-DME) (TC 2.A.7.4) family.

The protein localises to the membrane. This chain is WAT1-related protein At5g40240, found in Arabidopsis thaliana (Mouse-ear cress).